The chain runs to 361 residues: Alanine racemase (361 aa).

The active-site Proton acceptor; specific for D-alanine is Lys-35. Lys-35 bears the N6-(pyridoxal phosphate)lysine mark. Position 130 (Arg-130) interacts with substrate. Tyr-257 acts as the Proton acceptor; specific for L-alanine in catalysis. Residue Met-305 participates in substrate binding.

Belongs to the alanine racemase family. The cofactor is pyridoxal 5'-phosphate.

The enzyme catalyses L-alanine = D-alanine. The protein operates within amino-acid biosynthesis; D-alanine biosynthesis; D-alanine from L-alanine: step 1/1. Catalyzes the interconversion of L-alanine and D-alanine. May also act on other amino acids. The chain is Alanine racemase (alr) from Nitrosomonas eutropha (strain DSM 101675 / C91 / Nm57).